The chain runs to 298 residues: MNHIQEAFLNTLKVERNFSEHTLKSYQDDLIQFNQFLEQEHLQLKTFEYRDARNYLSYLYSNHLKRTSVSRKISTLRTFYEYWMTLDENIINPFVQLVHPKKEKYLPQFFYEEEMEALFKTVEEDTSKNLRDRVILELLYATGIRVSELVNIKKQDIDFYANGVTVLGKGSKERFVPFGAYCRQSIENYLEHFKPIQSCNHDFLILNMKGEAITERGVRYVLNDIVKRTAGVSEIHPHKLRHTFATHLLNQGADLRTVQSLLGHVNLSTTGKYTHVSNQQLRKVYLNAHPRAKKENEI.

A Core-binding (CB) domain is found at 1–84; the sequence is MNHIQEAFLN…TLRTFYEYWM (84 aa). The region spanning 105 to 286 is the Tyr recombinase domain; the sequence is YLPQFFYEEE…SNQQLRKVYL (182 aa). Active-site residues include arginine 145, lysine 169, histidine 238, arginine 241, and histidine 264. Tyrosine 273 functions as the O-(3'-phospho-DNA)-tyrosine intermediate in the catalytic mechanism.

It belongs to the 'phage' integrase family. XerC subfamily. As to quaternary structure, forms a cyclic heterotetrameric complex composed of two molecules of XerC and two molecules of XerD.

Its subcellular location is the cytoplasm. Its function is as follows. Site-specific tyrosine recombinase, which acts by catalyzing the cutting and rejoining of the recombining DNA molecules. The XerC-XerD complex is essential to convert dimers of the bacterial chromosome into monomers to permit their segregation at cell division. It also contributes to the segregational stability of plasmids. The chain is Tyrosine recombinase XerC from Staphylococcus aureus (strain JH1).